Consider the following 1068-residue polypeptide: Carbamoyl phosphate synthase large chain (1068 aa).

The tract at residues 1–403 is carboxyphosphate synthetic domain; sequence MPKRTDINTI…SLQKALRGLE (403 aa). ATP contacts are provided by Arg129, Arg169, Gly175, Gly176, Gln208, Val210, Glu215, Gly241, Val242, His243, Gln285, and Glu299. An ATP-grasp 1 domain is found at 133–328; that stretch reads KEAMEKIGLS…IAKVAAKLAV (196 aa). Positions 285, 299, and 301 each coordinate Mg(2+). Residues Gln285, Glu299, and Asn301 each contribute to the Mn(2+) site. Positions 404–548 are oligomerization domain; that stretch reads TGICGFNLMS…YSTYEEECES (145 aa). The tract at residues 549–930 is carbamoyl phosphate synthetic domain; sequence RPSDKKKIMI…AFLKAQLGAN (382 aa). An ATP-grasp 2 domain is found at 673–864; sequence QQILHKLHLK…LAKIAARVMA (192 aa). Residues Arg709, His748, Leu750, Glu755, Gly780, Ile781, His782, Ser783, Gln823, and Glu835 each contribute to the ATP site. 3 residues coordinate Mg(2+): Gln823, Glu835, and Asn837. Mn(2+) is bound by residues Gln823, Glu835, and Asn837. An MGS-like domain is found at 931–1068; that stretch reads ERIPKTGKVF…SLQDLHQRLL (138 aa). An allosteric domain region spans residues 931–1068; that stretch reads ERIPKTGKVF…SLQDLHQRLL (138 aa).

The protein belongs to the CarB family. As to quaternary structure, composed of two chains; the small (or glutamine) chain promotes the hydrolysis of glutamine to ammonia, which is used by the large (or ammonia) chain to synthesize carbamoyl phosphate. Tetramer of heterodimers (alpha,beta)4. Mg(2+) is required as a cofactor. Mn(2+) serves as cofactor.

It catalyses the reaction hydrogencarbonate + L-glutamine + 2 ATP + H2O = carbamoyl phosphate + L-glutamate + 2 ADP + phosphate + 2 H(+). The enzyme catalyses hydrogencarbonate + NH4(+) + 2 ATP = carbamoyl phosphate + 2 ADP + phosphate + 2 H(+). It functions in the pathway amino-acid biosynthesis; L-arginine biosynthesis; carbamoyl phosphate from bicarbonate: step 1/1. Its pathway is pyrimidine metabolism; UMP biosynthesis via de novo pathway; (S)-dihydroorotate from bicarbonate: step 1/3. Its function is as follows. Large subunit of the glutamine-dependent carbamoyl phosphate synthetase (CPSase). CPSase catalyzes the formation of carbamoyl phosphate from the ammonia moiety of glutamine, carbonate, and phosphate donated by ATP, constituting the first step of 2 biosynthetic pathways, one leading to arginine and/or urea and the other to pyrimidine nucleotides. The large subunit (synthetase) binds the substrates ammonia (free or transferred from glutamine from the small subunit), hydrogencarbonate and ATP and carries out an ATP-coupled ligase reaction, activating hydrogencarbonate by forming carboxy phosphate which reacts with ammonia to form carbamoyl phosphate. This is Carbamoyl phosphate synthase large chain from Pasteurella multocida (strain Pm70).